The sequence spans 175 residues: Chromobox protein homolog hpl-2 (175 aa).

In terms of domain architecture, Chromo spans F19–R78. The tract at residues S71–K109 is disordered. Residues S88–K98 are compositionally biased toward acidic residues. Residues D99–K109 are compositionally biased toward basic and acidic residues. Positions K115–A172 constitute a Chromo 2; shadow subtype domain.

As to quaternary structure, interacts with histone H3 when di-, or tri-methylated at 'Lys-27' (H3K27me2/me3), or tri-methylated at 'Lys-9' (H3K9me3). Interacts with Tar DNA-binding protein homolog tdp-1; interaction may maintain localization of hpl-2 to gene bodies. Interacts with histone H1 his-24, probably via interaction with hpl-1. Interacts with chromobox protein homolog hpl-1. May form homodimers. Interacts (via chromo (shadow subtype) domain) with zinc finger protein lin-13 (via PLVPV motif); the interaction is direct and influences localization of hpl-2 to nuclear foci.

The protein localises to the nucleus. Its subcellular location is the chromosome. Seems to be involved in transcriptional silencing in heterochromatin-like complexes. Probably does not act as global transcriptional repressor, instead targeting a subset of genes. Involved in RNA processing mediated by Tar DNA-binding protein homolog tdp-1. Plays a role in linking epigenetic regulation with the innate immune response. Involved in the endoplasmic reticulum (ER) stress response via modulation of the unfolded protein response (UPR), acting mainly through the IRE1-XBP1 pathway and perhaps, to a lesser extent, through the autophagy pathway. May act in a common pathway with retinoblastoma-like protein homolog lin-35 and zinc finger protein lin-13 to influence the ER stress response in the intestine. Plays a role in the formation of the vulva and in fertility, acting together with a CoREST-like complex, and chromobox protein homolog hpl-1. Acting in concert with hpl-1 and histone H1 protein his-24, involved in reproduction, somatic gonad development, male tail development and vulval cell fate specification; perhaps as a result of modulating expression of Hox genes mab-5 and egl-5. In vulval cell fate specification may act by repressing transcription, of EGF family gene lin-3 in hypodermal hyp7, and of homeobox lin-39 in vulval precursor cells (VPC). Role in growth and somatic gonad development is antagonized by histone-lysine N-methyltransferase set-2/SET1. Required for larval development, acting redundantly with hpl-1. Plays a role in regulation of the developmentally arrested larval state known as dauer, longevity, and lipid metabolism. This chain is Chromobox protein homolog hpl-2, found in Caenorhabditis elegans.